A 651-amino-acid chain; its full sequence is MTSPTFIRLRFAFKLSFAIVAALFLGFHLQLETPRWSVLTAAIVAAGPAFAAGGEPFSGAIRHRGWLRIIGTFIGCIGGLIIIVLTIRAPVLTLMLCCLWAGVCTWISSLVRVENSYAFGLAGYTALIIIVTTGETPLLTPQFAVERCSEIVLGIVCAVMADLLFSPRSIKQDIDRLVDKVLLDQYRLLQLCIRPAEKTDIDRAWNDLVKNTTALNGMRSYLMMESSRWQRCNRRLQVLHTESLTLITQACETYLVLANHPDILTAELKAMLSEPAPTPAEIHQRMKTLRQFIAVSHSEAIPHTISSWVGAATRYLLLAKGIHTNSSISRVEEGILAGVVPVKHVSAEGHHAMINGLRTGVATAIGGLFWLWTGWTSGAGCMVMIAVVTSLAMRTPNPRMVAIDFLLGVIMALPIGALYFMFIIPATQQSMLLLCISLGLLAFIIGIEVQKRRLGSLGTLASTINIMVLSNPMEFNVSLFLDSALGQIVGCFVSLIVLLLIRDNAKDRTGRTLLNRFVYSAVSALTTNKARRNENHLPALYQQLNQLLMMFPGDIDKYRLALTLIIAHQRLNKTEVPVNAELSAFHKQIRYTADRVINAKNSQKRRYYFARLLQELDQYQQKLVDYQSPDAVTRPVKRLADMLHKYQSALI.

Helical transmembrane passes span 11-31 (FAFK…HLQL), 41-61 (AAIV…SGAI), 67-87 (LRII…VLTI), 91-111 (VLTL…SSLV), 119-139 (FGLA…TPLL), 150-170 (EIVL…PRSI), 368-388 (LFWL…IAVV), 405-425 (FLLG…FIIP), 429-449 (QSML…GIEV), 460-480 (LAST…VSLF), and 481-501 (LDSA…LLLI).

The protein belongs to the aromatic acid exporter ArAE (TC 2.A.85) family.

It is found in the cell inner membrane. In terms of biological role, forms an efflux pump with AaeA. Could function as a metabolic relief valve, allowing to eliminate certain compounds when they accumulate to high levels in the cell. This Yersinia enterocolitica serotype O:8 / biotype 1B (strain NCTC 13174 / 8081) protein is p-hydroxybenzoic acid efflux pump subunit AaeB.